Here is a 108-residue protein sequence, read N- to C-terminus: MAAPCLLRQGRAGALKTMLQEAQVFRGLASTVSLSAESGKSEKGQPHNPKKQSPPKKPAPVPAEPFDNTTYKNLQHHDYTTYTFLDLNLELSKFRMPQPSSGRESPRH.

The transit peptide at 1–34 (MAAPCLLRQGRAGALKTMLQEAQVFRGLASTVSL) directs the protein to the mitochondrion. A disordered region spans residues 33 to 72 (SLSAESGKSEKGQPHNPKKQSPPKKPAPVPAEPFDNTTYK). Serine 105 carries the phosphoserine modification.

Belongs to the complex I NDUFV3 subunit family. As to quaternary structure, complex I is composed of 45 different subunits. This is a component of the flavoprotein-sulfur (FP) fragment of the enzyme.

Its subcellular location is the mitochondrion inner membrane. Accessory subunit of the mitochondrial membrane respiratory chain NADH dehydrogenase (Complex I), that is believed not to be involved in catalysis. Complex I functions in the transfer of electrons from NADH to the respiratory chain. The immediate electron acceptor for the enzyme is believed to be ubiquinone. May be the terminally assembled subunit of Complex I. The sequence is that of NADH dehydrogenase [ubiquinone] flavoprotein 3, mitochondrial (NDUFV3) from Pongo pygmaeus (Bornean orangutan).